Here is a 261-residue protein sequence, read N- to C-terminus: MTLKARVIPCLDVKDGRVVKGVNFVDLIDAGDPVEAARAYDAAGADELCFLDITASSDNRETIFDVVARTAEQCFMPLTVGGGVRQVADIRKLLLAGADKVSINTAAVKNPEFVAEAADKFGNQCIVVAIDAKKVSGAGENDHWEIFTHGGRQPTGIDAVEFAQKVVDLGAGEILLTSMDRDGTKAGYDVALTRAVADSVRAPVIASGGVGTLDHLVAGIRDGHATAVLAASIFHFGTYTIGEAKRYMAEAGIPMRLDPVR.

Residues Asp12 and Asp131 contribute to the active site.

It belongs to the HisA/HisF family. In terms of assembly, heterodimer of HisH and HisF.

It is found in the cytoplasm. The enzyme catalyses 5-[(5-phospho-1-deoxy-D-ribulos-1-ylimino)methylamino]-1-(5-phospho-beta-D-ribosyl)imidazole-4-carboxamide + L-glutamine = D-erythro-1-(imidazol-4-yl)glycerol 3-phosphate + 5-amino-1-(5-phospho-beta-D-ribosyl)imidazole-4-carboxamide + L-glutamate + H(+). It participates in amino-acid biosynthesis; L-histidine biosynthesis; L-histidine from 5-phospho-alpha-D-ribose 1-diphosphate: step 5/9. Functionally, IGPS catalyzes the conversion of PRFAR and glutamine to IGP, AICAR and glutamate. The HisF subunit catalyzes the cyclization activity that produces IGP and AICAR from PRFAR using the ammonia provided by the HisH subunit. This is Imidazole glycerol phosphate synthase subunit HisF from Brucella melitensis biotype 2 (strain ATCC 23457).